Consider the following 462-residue polypeptide: Na(+)/H(+) antiporter NhaA (462 aa).

11 helical membrane passes run 24–44 (ISGLIMLGFALAGLVLANLPL), 66–86 (LPIGHWAQDGLLTIFFLTVGL), 102–122 (AAAVPMLCAVGGMITPPILFL), 156–176 (GWAVPTATDIAFSLAVLALFA), 196–216 (LLAIILIAVFFSSVNAWYWFI), 235–255 (PWIAVGVVGILAWIMMFEAGI), 256–275 (HPTLAGVLVGLLTPARVMHG), 290–310 (PFSALLALPIFALFATGVHFE), 312–332 (MSPLLLLSPLVIALIVALVVG), 361–381 (MIPAAVACGIGFTVSFLIASL), and 392–412 (ARFGVLVASLIAAAISGVLLS).

Belongs to the NhaA Na(+)/H(+) (TC 2.A.33) antiporter family.

The protein resides in the cell membrane. It catalyses the reaction Na(+)(in) + 2 H(+)(out) = Na(+)(out) + 2 H(+)(in). Na(+)/H(+) antiporter that extrudes sodium in exchange for external protons. This is Na(+)/H(+) antiporter NhaA from Bifidobacterium breve (strain NCIMB 8807 / UCC2003).